Reading from the N-terminus, the 20-residue chain is Beta-fibrinogenase jerdofibrase (20 aa).

The Peptidase S1 domain maps to 1-20; it reads VIGGDECNINEHPFLVLVYY.

Belongs to the peptidase S1 family. Snake venom subfamily. Monomer. In terms of tissue distribution, expressed by the venom gland.

It is found in the secreted. Inhibited by PMSF and soybean trypsin inhibitor. Partially inhibited by DTT and cysteine. Not affected by EDTA. In terms of biological role, fibrin(ogen)olytic serine protease degrades Bbeta-chain of human fibrinogen (FGB) and shows a lower activity on Aa-chain (FGA). Also degrades fibrin directly. Releases fibrinopeptide B and a small amount of fibrinopeptide A. Has also be shown to catalyze the hydrolysis of some chromogenic substrates such as S2238, S2160, S2302 and S2251. This Protobothrops jerdonii (Jerdon's pitviper) protein is Beta-fibrinogenase jerdofibrase.